The sequence spans 434 residues: Acyl transferase 15 (434 aa).

Catalysis depends on proton acceptor residues histidine 164 and aspartate 371.

This sequence belongs to the plant acyltransferase family.

In terms of biological role, involved in the incorporation of ferulate into the cell wall. This Oryza sativa subsp. japonica (Rice) protein is Acyl transferase 15.